A 1085-amino-acid chain; its full sequence is Solute carrier family 12 member 4 (1085 aa).

Residues 1 to 119 (MPHFTVVPVD…RRAAKAPSMG (119 aa)) are Cytoplasmic-facing. The residue at position 24 (Ser24) is a Phosphoserine. Positions 28–46 (YGERAEREDPDGHGNHRES) are enriched in basic and acidic residues. Positions 28–47 (YGERAEREDPDGHGNHRESS) are disordered. 4 positions are modified to phosphoserine: Ser47, Ser59, Ser81, and Ser88. The chain crosses the membrane as a discontinuously helical span at residues 120-141 (TLMGVYLPCLQNIFGVILFLRL). K(+) is bound by residues Asn131 and Ile132. Over 142 to 149 (TWMVGTAG) the chain is Extracellular. Residues 150–172 (VLQALLIVLICCCCTLLTAISMS) form a helical membrane-spanning segment. Over 173–196 (AIATNGVVPAGGSYFMISRSLGPE) the chain is Cytoplasmic. A helical membrane pass occupies residues 197–225 (FGGAVGLCFYLGTTFAAAMYILGAIEILL). K(+) is bound at residue Tyr216. Residues 226 to 248 (TYIAPPAAIFYPSGTHDTSNATL) lie on the Extracellular side of the membrane. Asn245 carries an N-linked (GlcNAc...) asparagine glycan. A run of 2 helical transmembrane segments spans residues 249 to 271 (NNMR…VGVK) and 272 to 297 (YVNK…GGIK). The Extracellular portion of the chain corresponds to 298–419 (SMFDPPVFPV…LYVVADIATS (122 aa)). Cys308 and Cys323 are joined by a disulfide. Asn312, Asn331, and Asn347 each carry an N-linked (GlcNAc...) asparagine glycan. A disulfide bridge connects residues Cys343 and Cys353. A helical transmembrane segment spans residues 420-440 (FTVLVGIFFPSVTGIMAGSNR). The K(+) site is built by Pro429 and Thr432. Positions 433, 434, and 435 each coordinate chloride. At 441–450 (SGDLRDAQKS) the chain is on the cytoplasmic side. The chain crosses the membrane as a helical span at residues 451 to 473 (IPVGTILAIVTTSLVYFSSVVLF). Residues 474–504 (GACIEGVVLRDKYGDGVSRNLVVGTLAWPSP) lie on the Extracellular side of the membrane. A helical transmembrane segment spans residues 505–531 (WVIVVGSFFSTCGAGLQSLTGAPRLLQ). Over 532-554 (AIAKDNIIPFLRVFGHGKANGEP) the chain is Cytoplasmic. The next 2 helical transmembrane spans lie at 555–575 (TWAL…ASLD) and 576–598 (MVAP…ACAV). Tyr589 contacts chloride. Residues 599-612 (QTLLRTPNWRPRFK) are Cytoplasmic-facing. 2 helical membrane-spanning segments follow: residues 613–635 (YYHW…VSSW) and 636–651 (YYAL…IYKY). Residues 652–1085 (IEYQGAEKEW…GGREVITIYS (434 aa)) are Cytoplasmic-facing. A scissor helix region spans residues 665–681 (IRGLSLSAARYALLRLE). The ATP site is built by Leu697, Lys699, Lys707, Tyr708, and Val730. Ser734 carries the phosphoserine modification. Residues Gly794, Trp795, and Tyr797 each coordinate ATP. A phosphoserine mark is found at Ser916 and Ser967. Thr983 carries the phosphothreonine modification. Position 1050 is a phosphoserine (Ser1050).

This sequence belongs to the SLC12A transporter family. K/Cl co-transporter subfamily. As to quaternary structure, homodimer; adopts a domain-swap conformation at the scissor helices connecting the transmembrane domain and C-terminal domain. Heterodimer with other K-Cl cotransporters. Post-translationally, N-glycosylated. In terms of processing, phosphorylated, phosphorylation may regulate transporter activity.

It is found in the cell membrane. The catalysed reaction is K(+)(in) + chloride(in) = K(+)(out) + chloride(out). Inhibited by WNK3. Functionally, mediates electroneutral potassium-chloride cotransport when activated by cell swelling. May contribute to cell volume homeostasis in single cells. May be involved in the regulation of basolateral Cl(-) exit in NaCl absorbing epithelia. The protein is Solute carrier family 12 member 4 (SLC12A4) of Oryctolagus cuniculus (Rabbit).